A 223-amino-acid chain; its full sequence is ATP synthase subunit a 2 (223 aa).

A run of 5 helical transmembrane segments spans residues 17 to 37 (VAIT…ALVC), 77 to 97 (FLPL…SGVL), 106 to 126 (KIET…YFGV), 173 to 193 (FIIG…LMAL), and 195 to 215 (ILVG…FIGA).

This sequence belongs to the ATPase A chain family. As to quaternary structure, F-type ATPases have 2 components, CF(1) - the catalytic core - and CF(0) - the membrane proton channel. CF(1) has five subunits: alpha(3), beta(3), gamma(1), delta(1), epsilon(1). CF(0) has four main subunits: a, b, b' and c.

The protein resides in the cell inner membrane. Functionally, key component of the proton channel; it plays a direct role in the translocation of protons across the membrane. In Bradyrhizobium sp. (strain BTAi1 / ATCC BAA-1182), this protein is ATP synthase subunit a 2.